A 416-amino-acid polypeptide reads, in one-letter code: Ena/VASP-like protein (416 aa).

The 112-residue stretch at 1-112 (MSEQSICQAR…NAMLFALNIM (112 aa)) folds into the WH1 domain. A compositionally biased stretch (polar residues) spans 114-129 (SQEGGPSSQRQVQNGP). Disordered regions lie at residues 114-133 (SQEGGPSSQRQVQNGPSPDE) and 141-369 (VMEQ…PAGS). Residue serine 130 is modified to Phosphoserine. Positions 141–157 (VMEQHQQQRQESLERRT) are enriched in basic and acidic residues. Positions 169–180 (PSSAASAPVSCS) are enriched in low complexity. Positions 181-206 (GPPPPPPPPVPPPPTGATPPPPPPLP) are enriched in pro residues. Residues 222–242 (GLAAAIAGAKLRRVQRPEDAS) form an EVH2 block A region. An EVH2 region spans residues 222-413 (GLAAAIAGAK…DAIRQELSGI (192 aa)). A KLKR motif is present at residues 231–234 (KLRR). Positions 242–253 (SGGSSPSGTSKS) are enriched in low complexity. Phosphoserine occurs at positions 246 and 259. The EVH2 block B stretch occupies residues 265–282 (GGLMEEMNKLLAKRRKAA). Positions 299–320 (EDPSTSPSPGTRAASQPPNSSE) are enriched in polar residues. Serine 304, serine 306, serine 329, serine 331, serine 341, serine 349, serine 354, and serine 369 each carry phosphoserine. The span at 321–331 (AGRKPWERSNS) shows a compositional bias: basic and acidic residues. The tract at residues 342–362 (RTPSVAKSPEAKSPLQSQPHS) is required for interaction with ZDHHC17. The tract at residues 379-413 (DLDRMKQEILEEVVRELHKVKEEIIDAIRQELSGI) is EVH2 block C.

This sequence belongs to the Ena/VASP family. Homotetramer. Binds to the SH3 domains of ABL1, LYN and SRC. Also binds to profilin, with preference for isoform IIa of PFN2, and the WW domain of APBB1/FE65. Binds to SEMA6A. Interacts, via the Pro-rich region, with the C-terminal SH3 domain of DNMBP. Interacts with RAPH1. Binds, via the EVH1 domain, the Pro-rich domain of Listeria monocytogenes actA. Binds, via the EVH1 domain, the Pro-rich domain of ZYX. Interacts with FYB1. Interacts with ZDHHC17. In terms of processing, phosphorylated by PKA; phosphorylation abolishes binding to SH3 domains of ABL and SRC.

Its subcellular location is the cytoplasm. The protein resides in the cytoskeleton. It is found in the stress fiber. It localises to the cell projection. The protein localises to the lamellipodium. Its function is as follows. Ena/VASP proteins are actin-associated proteins involved in a range of processes dependent on cytoskeleton remodeling and cell polarity such as axon guidance and lamellipodial and filopodial dynamics in migrating cells. EVL enhances actin nucleation and polymerization. The sequence is that of Ena/VASP-like protein (EVL) from Homo sapiens (Human).